Consider the following 277-residue polypeptide: Thymidylate synthase (277 aa).

Arg21 contributes to the dUMP binding site. His51 provides a ligand contact to (6R)-5,10-methylene-5,6,7,8-tetrahydrofolate. 139-140 (RR) is a dUMP binding site. Cys159 functions as the Nucleophile in the catalytic mechanism. Residues 179–182 (RSAD), Asn190, and 220–222 (HIY) each bind dUMP. Asp182 is a binding site for (6R)-5,10-methylene-5,6,7,8-tetrahydrofolate. Residue Ala276 participates in (6R)-5,10-methylene-5,6,7,8-tetrahydrofolate binding.

The protein belongs to the thymidylate synthase family. Bacterial-type ThyA subfamily. Homodimer.

Its subcellular location is the cytoplasm. It catalyses the reaction dUMP + (6R)-5,10-methylene-5,6,7,8-tetrahydrofolate = 7,8-dihydrofolate + dTMP. It participates in pyrimidine metabolism; dTTP biosynthesis. Its function is as follows. Catalyzes the reductive methylation of 2'-deoxyuridine-5'-monophosphate (dUMP) to 2'-deoxythymidine-5'-monophosphate (dTMP) while utilizing 5,10-methylenetetrahydrofolate (mTHF) as the methyl donor and reductant in the reaction, yielding dihydrofolate (DHF) as a by-product. This enzymatic reaction provides an intracellular de novo source of dTMP, an essential precursor for DNA biosynthesis. The chain is Thymidylate synthase from Roseobacter denitrificans (strain ATCC 33942 / OCh 114) (Erythrobacter sp. (strain OCh 114)).